Reading from the N-terminus, the 115-residue chain is DNA-binding protein APE_1087b (115 aa).

It belongs to the PDCD5 family.

The polypeptide is DNA-binding protein APE_1087b (Aeropyrum pernix (strain ATCC 700893 / DSM 11879 / JCM 9820 / NBRC 100138 / K1)).